We begin with the raw amino-acid sequence, 607 residues long: Bifunctional lysine-specific demethylase and histidyl-hydroxylase NO66 (607 aa).

Disordered stretches follow at residues 23-121 and 139-184; these read GPTI…IKTN and ATQH…GEVE. Polar residues predominate over residues 25–37; the sequence is TIQQTGATKTPKT. Residues 39-58 are compositionally biased toward basic residues; sequence SKIRRLSIRKSTRKIKHALK. Residues 156-167 are compositionally biased toward basic and acidic residues; that stretch reads DKTPVKRVRSDT. The JmjC domain maps to 188-405; that stretch reads EEAEKMFEWL…DLMEKLVPAA (218 aa). Residues His328, Asp330, and His371 each coordinate Fe cation.

The protein belongs to the ROX family. NO66 subfamily. Fe(2+) is required as a cofactor.

It is found in the nucleus. The enzyme catalyses L-histidyl-[protein] + 2-oxoglutarate + O2 = (3S)-3-hydroxy-L-histidyl-[protein] + succinate + CO2. The catalysed reaction is N(6),N(6)-dimethyl-L-lysyl(36)-[histone H3] + 2 2-oxoglutarate + 2 O2 = L-lysyl(36)-[histone H3] + 2 formaldehyde + 2 succinate + 2 CO2. In terms of biological role, oxygenase that can act as both a histone lysine demethylase and a ribosomal histidine hydroxylase. Specifically demethylates 'Lys-4' (H3K4me) and 'Lys-36' (H3K36me) of histone H3, thereby playing a central role in histone code. Also catalyzes the hydroxylation of 60S ribosomal protein L8. The polypeptide is Bifunctional lysine-specific demethylase and histidyl-hydroxylase NO66 (Branchiostoma floridae (Florida lancelet)).